The chain runs to 562 residues: Actin-related protein 8 (562 aa).

248–251 (DVGD) is a binding site for ATP.

Belongs to the actin family. ARP8 subfamily. In terms of assembly, component of the chromatin remodeling Ino80 complex. Exists as monomers and dimers, but the dimer is most probably the biologically relevant form required for stable interactions with histones that exploits the twofold symmetry of the nucleosome core.

The protein resides in the nucleus. In terms of biological role, plays an important role in the functional organization of mitotic chromosomes. Exhibits low basal ATPase activity, and unable to polymerize. Functionally, proposed core component of the chromatin remodeling INO80 complex which is involved in transcriptional regulation, DNA replication and probably DNA repair. Strongly prefer nucleosomes and H3-H4 tetramers over H2A-H2B dimers, suggesting it may act as a nucleosome recognition module within the complex. This chain is Actin-related protein 8, found in Aedes aegypti (Yellowfever mosquito).